We begin with the raw amino-acid sequence, 149 residues long: Large ribosomal subunit protein bL9 (149 aa).

This sequence belongs to the bacterial ribosomal protein bL9 family.

Its function is as follows. Binds to the 23S rRNA. The polypeptide is Large ribosomal subunit protein bL9 (Legionella pneumophila subsp. pneumophila (strain Philadelphia 1 / ATCC 33152 / DSM 7513)).